Here is a 155-residue protein sequence, read N- to C-terminus: Ribonuclease H (155 aa).

Residues M1–S142 form the RNase H type-1 domain. Positions 10, 48, 70, and 134 each coordinate Mg(2+).

Belongs to the RNase H family. As to quaternary structure, monomer. Mg(2+) is required as a cofactor.

The protein resides in the cytoplasm. It catalyses the reaction Endonucleolytic cleavage to 5'-phosphomonoester.. In terms of biological role, endonuclease that specifically degrades the RNA of RNA-DNA hybrids. The chain is Ribonuclease H from Klebsiella pneumoniae subsp. pneumoniae (strain ATCC 700721 / MGH 78578).